The sequence spans 312 residues: Malate dehydrogenase (312 aa).

NAD(+) is bound by residues 12–17 (GAGFTG) and D36. Positions 87 and 93 each coordinate substrate. NAD(+) contacts are provided by residues N100 and 123–125 (LTN). N125 provides a ligand contact to substrate. S149 is modified (phosphoserine). R156 contributes to the substrate binding site. Catalysis depends on H180, which acts as the Proton acceptor.

The protein belongs to the LDH/MDH superfamily. MDH type 3 family.

The enzyme catalyses (S)-malate + NAD(+) = oxaloacetate + NADH + H(+). Functionally, catalyzes the reversible oxidation of malate to oxaloacetate. The sequence is that of Malate dehydrogenase from Bacillus cereus (strain ATCC 14579 / DSM 31 / CCUG 7414 / JCM 2152 / NBRC 15305 / NCIMB 9373 / NCTC 2599 / NRRL B-3711).